The sequence spans 287 residues: NAD-dependent protein deacylase sir-2.2 (287 aa).

The 278-residue stretch at 10–287 (AELCENSLKK…YKISDVLKEM (278 aa)) folds into the Deacetylase sirtuin-type domain. NAD(+)-binding positions include 35-55 (GAGISTESGIPDYRSKDVGLY) and 116-119 (QNVD). The active-site Proton acceptor is the His134. Zn(2+) contacts are provided by Cys142, Cys145, Cys196, and Cys199. NAD(+) is bound by residues 236 to 238 (GTS), 262 to 264 (NIG), and Ile280.

The protein belongs to the sirtuin family. Class II subfamily. Interacts with pyc-1, pcca-1 and mccc-1. Zn(2+) is required as a cofactor. As to expression, ubiquitously expressed with high expression in the pharynx, body wall muscles and gonad.

The protein localises to the mitochondrion matrix. It is found in the mitochondrion. The enzyme catalyses N(6)-acetyl-L-lysyl-[protein] + NAD(+) + H2O = 2''-O-acetyl-ADP-D-ribose + nicotinamide + L-lysyl-[protein]. NAD-dependent protein deacylase. Catalyzes the NAD-dependent hydrolysis of acyl groups from lysine residues. Plays a role in oxidative stress resistance. The protein is NAD-dependent protein deacylase sir-2.2 (sir-2.2) of Caenorhabditis elegans.